The chain runs to 312 residues: Golgi to ER traffic protein 2 (312 aa).

The Cytoplasmic segment spans residues 1-175; sequence MSDSPSISAE…VQYNTYRHQV (175 aa). A helical membrane pass occupies residues 176 to 196; sequence WKFRFLAVRYFALLANFIYHF. At 197–224 the chain is on the lumenal side; the sequence is YIIGDSISFASSSHQFIRELIPVEPARS. The helical transmembrane segment at 225-244 threads the bilayer; the sequence is FFTLFSTIEVVIIASYYFLG. The Cytoplasmic portion of the chain corresponds to 245–288; that stretch reads TKEGFFSTATSNNFVVKLLDMGSMVLPQLQQFKTIAVRLLGYYE. Residues 289 to 309 form a helical membrane-spanning segment; sequence LLAVLLGDLSLVVVLFGLHSV. The Lumenal segment spans residues 310-312; that stretch reads LGN.

This sequence belongs to the GET2 family. Component of the Golgi to ER traffic (GET) complex, which is composed of GET1, GET2 and GET3. Within the complex, GET1 and GET2 form a heterotetramer which is stabilized by phosphatidylinositol binding and which binds to the GET3 homodimer.

The protein localises to the endoplasmic reticulum membrane. It is found in the golgi apparatus membrane. Its function is as follows. Required for the post-translational delivery of tail-anchored (TA) proteins to the endoplasmic reticulum. Together with GET1, acts as a membrane receptor for soluble GET3, which recognizes and selectively binds the transmembrane domain of TA proteins in the cytosol. The GET complex cooperates with the HDEL receptor ERD2 to mediate the ATP-dependent retrieval of resident ER proteins that contain a C-terminal H-D-E-L retention signal from the Golgi to the ER. The protein is Golgi to ER traffic protein 2 of Scheffersomyces stipitis (strain ATCC 58785 / CBS 6054 / NBRC 10063 / NRRL Y-11545) (Yeast).